We begin with the raw amino-acid sequence, 378 residues long: Fructose-1,6-bisphosphatase class 1 2 (378 aa).

Glutamate 98, aspartate 120, leucine 122, and aspartate 123 together coordinate Mg(2+). Substrate-binding positions include aspartate 123–serine 126 and asparagine 227. Glutamate 299 serves as a coordination point for Mg(2+).

The protein belongs to the FBPase class 1 family. Homotetramer. Requires Mg(2+) as cofactor.

It localises to the cytoplasm. It catalyses the reaction beta-D-fructose 1,6-bisphosphate + H2O = beta-D-fructose 6-phosphate + phosphate. It functions in the pathway carbohydrate biosynthesis; gluconeogenesis. The sequence is that of Fructose-1,6-bisphosphatase class 1 2 from Paraburkholderia xenovorans (strain LB400).